Here is a 125-residue protein sequence, read N- to C-terminus: Fluoride-specific ion channel FluC (125 aa).

The next 4 helical transmembrane spans lie at 1–21 (MIQA…RYYV), 32–52 (AFPW…GVFA), 68–88 (LLIT…LDAI), and 101–121 (IYIA…LAVM). Na(+) contacts are provided by glycine 75 and threonine 78.

It belongs to the fluoride channel Fluc/FEX (TC 1.A.43) family.

It localises to the cell inner membrane. The enzyme catalyses fluoride(in) = fluoride(out). With respect to regulation, na(+) is not transported, but it plays an essential structural role and its presence is essential for fluoride channel function. Functionally, fluoride-specific ion channel. Important for reducing fluoride concentration in the cell, thus reducing its toxicity. This chain is Fluoride-specific ion channel FluC, found in Rhizobium johnstonii (strain DSM 114642 / LMG 32736 / 3841) (Rhizobium leguminosarum bv. viciae).